The primary structure comprises 187 residues: Protein SCM4 (187 aa).

3 consecutive transmembrane segments (helical) span residues 11-31, 45-65, and 80-100; these read IAVS…VISI, VLCT…GAFG, and LLCG…VSLF. Over residues 114-134 the composition is skewed to basic and acidic residues; sequence DLEKQKDEKLPQHHPEVKDGE. The tract at residues 114-135 is disordered; sequence DLEKQKDEKLPQHHPEVKDGEA. A helical transmembrane segment spans residues 162-182; that stretch reads MSLHMSIVTGITIFTFGKCIL.

Belongs to the ATG33 family.

Its subcellular location is the membrane. The polypeptide is Protein SCM4 (SCM4) (Saccharomyces cerevisiae (strain ATCC 204508 / S288c) (Baker's yeast)).